The primary structure comprises 209 residues: Protein GrpE (209 aa).

A compositionally biased stretch (polar residues) spans 1 to 13; sequence MSNDSSKAKQNQV. The disordered stretch occupies residues 1–27; the sequence is MSNDSSKAKQNQVDEAVEGEIITDNEN. Over residues 15–27 the composition is skewed to acidic residues; sequence EAVEGEIITDNEN.

Belongs to the GrpE family. As to quaternary structure, homodimer.

The protein resides in the cytoplasm. Participates actively in the response to hyperosmotic and heat shock by preventing the aggregation of stress-denatured proteins, in association with DnaK and GrpE. It is the nucleotide exchange factor for DnaK and may function as a thermosensor. Unfolded proteins bind initially to DnaJ; upon interaction with the DnaJ-bound protein, DnaK hydrolyzes its bound ATP, resulting in the formation of a stable complex. GrpE releases ADP from DnaK; ATP binding to DnaK triggers the release of the substrate protein, thus completing the reaction cycle. Several rounds of ATP-dependent interactions between DnaJ, DnaK and GrpE are required for fully efficient folding. In Shewanella sediminis (strain HAW-EB3), this protein is Protein GrpE.